Here is a 168-residue protein sequence, read N- to C-terminus: Coiled-coil domain-containing protein 200 (168 aa).

A coiled-coil region spans residues 16-50; that stretch reads LDRRRWLMAQQQQELQQKEQELKNHQEEEQQSEEK. The segment at 23–168 is disordered; it reads MAQQQQELQQ…LKSTNYIQQW (146 aa). A compositionally biased stretch (basic and acidic residues) spans 31-52; sequence QQKEQELKNHQEEEQQSEEKLQ. Over residues 70–82 the composition is skewed to low complexity; that stretch reads SQEQPQPSQQQPS. Pro residues-rich tracts occupy residues 83-94 and 104-117; these read VQPPSQPPPQPS and GPQP…PQPT. 2 stretches are compositionally biased toward polar residues: residues 124-138 and 145-168; these read RCTQ…QDSQ and PCQS…IQQW.

The chain is Coiled-coil domain-containing protein 200 from Homo sapiens (Human).